A 764-amino-acid chain; its full sequence is DNA-binding protein SATB1 (764 aa).

Residues 1 to 15 (MDHLNEATQGKEHSE) are compositionally biased toward basic and acidic residues. A disordered region spans residues 1-56 (MDHLNEATQGKEHSEMSNNVSDPKGPPAKIARLEQNGSPLGRGRLGSTGGKMQGVP). Positions 20-40 (VSDPKGPPAKIARLEQNGSPL) match the Nuclear localization signal motif. Gly residues predominate over residues 43-52 (GRLGSTGGKM). K51 participates in a covalent cross-link: Glycyl lysine isopeptide (Lys-Gly) (interchain with G-Cter in SUMO2). In terms of domain architecture, CMP spans 71-172 (GTMLPVFCVV…VVTLKIQLHS (102 aa)). Residue K136 is modified to N6-acetyllysine. A Protein interaction motif is present at residues 139 to 143 (PVPLS). Residues 175–248 (KLEDLPPEQW…WYKHFKKTKD (74 aa)) enclose the CUTL domain. Residue S185 is modified to Phosphoserine. Positions 224 to 278 (YYANVSAAKCQEFGRWYKHFKKTKDMMVEMDSLSELSQQGANHVNFGQQPVPGNT) are nuclear matrix targeting sequence (NMTS). The Nuclear matrix targeting sequence (NMTS) motif lies at 224 to 278 (YYANVSAAKCQEFGRWYKHFKKTKDMMVEMDSLSELSQQGANHVNFGQQPVPGNT). Residues 266 to 296 (HVNFGQQPVPGNTAEQPPSPAQLSHGSQPSV) show a composition bias toward polar residues. The interval 266 to 307 (HVNFGQQPVPGNTAEQPPSPAQLSHGSQPSVRTPLPNLHPGL) is disordered. A DNA-binding region (CUT 1) is located at residues 361 to 448 (LEQQVSTNTE…ERDRIYQDER (88 aa)). Residues Q390, 400–410 (RTQGLLSEILR), and N425 contribute to the DNA site. The tract at residues 450–474 (RSLNAASAMGPAPLLSTPPSRPPQV) is disordered. The CUT 2 DNA-binding region spans 484-571 (NGKPENNTMN…ERDAIYEQES (88 aa)). Positions 591–650 (QIQQQQQQQQQQQQQQQPPPPPPQPQPQPQAGPRLPPRQPTVASSAESDEENRQKTRPRT) are disordered. A compositionally biased stretch (low complexity) spans 593-606 (QQQQQQQQQQQQQQ). Positions 607–629 (QPPPPPPQPQPQPQAGPRLPPRQ) are enriched in pro residues. At S638 the chain carries Phosphoserine. The segment at residues 646–705 (TRPRTKISVEALGILQSFIQDVGLYPDEEAIQTLSAQLDLPKYTIIKFFQNQRYYLKHHG) is a DNA-binding region (homeobox). K745 participates in a covalent cross-link: Glycyl lysine isopeptide (Lys-Gly) (interchain with G-Cter in SUMO).

It belongs to the CUT homeobox family. Interacts with PCAF. Interacts with sumoylated PML and HDAC1 Tat via the CMP domain. Also interacts with DYNLT3 and POLR2J2. Binds to EP300. Homodimer. Part of the nuclear protein complex gamma-globin promoter and enhancer binding factor (gamma-PE) composed at least of SATB1 and HOXB2. Interaction with CtBP1 when not acetylated stabilizes attachment to DNA and promotes transcription repression. Interacts with CUX1 (via DNA-binding domains); the interaction inhibits the attachment of both proteins to DNA. Sumoylated. Sumoylation promotes cleavage by caspases. Post-translationally, phosphorylated by PKC. Acetylated by PCAF. Phosphorylated form interacts with HDAC1, but unphosphorylated form interacts with PCAF. DNA binding properties are activated by phosphorylation and inactivated by acetylation. In opposition, gene expression is down-regulated by phosphorylation but up-regulated by acetylation. In terms of processing, cleaved at Asp-254 by caspase-3 and caspase-6 during T-cell apoptosis in thymus and during B-cell stimulation. The cleaved forms cannot dimerize and lose transcription regulation function because of impaired DNA and chromatin association. In terms of tissue distribution, expressed in the subventricular zone, rostral migratory stream and in the olfactory bulb (at protein level). Mainly expressed in thymus, spleen, and lymph nodes with a lower level observed in the brain.

The protein resides in the nucleus. It is found in the PML body. Functionally, required for the switching of fetal globin species, and beta- and gamma-globin genes regulation during erythroid differentiation. Plays a role in chromatin organization and nuclear architecture during apoptosis. Crucial silencing factor contributing to the initiation of X inactivation mediated by Xist RNA that occurs during embryogenesis and in lymphoma. Binds to DNA at special AT-rich sequences, the consensus SATB1-binding sequence (CSBS), at nuclear matrix- or scaffold-associated regions. Thought to recognize the sugar-phosphate structure of double-stranded DNA. Transcriptional repressor controlling nuclear and viral gene expression in a phosphorylated and acetylated status-dependent manner, by binding to matrix attachment regions (MARs) of DNA and inducing a local chromatin-loop remodeling. Acts as a docking site for several chromatin remodeling enzymes and also by recruiting corepressors (HDACs) or coactivators (HATs) directly to promoters and enhancers. Modulates genes that are essential in the maturation of the immune T-cell CD8SP from thymocytes. Promotes neuronal differentiation of neural stem/progenitor cells in the adult subventricular zone, possibly by positively regulating the expression of NEUROD1. The sequence is that of DNA-binding protein SATB1 (Satb1) from Mus musculus (Mouse).